A 475-amino-acid polypeptide reads, in one-letter code: NADH-quinone oxidoreductase subunit N (475 aa).

A run of 14 helical transmembrane segments spans residues 7-27 (ISIA…VLLG), 40-60 (LLGA…SAVD), 74-94 (FIAI…LVAG), 105-125 (FEYT…LSAN), 127-147 (LMTL…LAAF), 161-181 (YFVL…LVYG), 191-211 (IAAA…LMAL), 242-262 (APKL…FGVY), 266-286 (WMLI…FGGL), 295-315 (LAYS…AGEV), 321-341 (VLTY…IVLA), 365-385 (LAVA…MAGF), 399-419 (ELYW…GYYL), and 448-468 (GATI…TGII).

Belongs to the complex I subunit 2 family. As to quaternary structure, NDH-1 is composed of 14 different subunits. Subunits NuoA, H, J, K, L, M, N constitute the membrane sector of the complex.

It localises to the cell inner membrane. The enzyme catalyses a quinone + NADH + 5 H(+)(in) = a quinol + NAD(+) + 4 H(+)(out). In terms of biological role, NDH-1 shuttles electrons from NADH, via FMN and iron-sulfur (Fe-S) centers, to quinones in the respiratory chain. The immediate electron acceptor for the enzyme in this species is believed to be ubiquinone. Couples the redox reaction to proton translocation (for every two electrons transferred, four hydrogen ions are translocated across the cytoplasmic membrane), and thus conserves the redox energy in a proton gradient. The chain is NADH-quinone oxidoreductase subunit N from Hirschia baltica (strain ATCC 49814 / DSM 5838 / IFAM 1418).